Here is a 415-residue protein sequence, read N- to C-terminus: Gamma-glutamyl phosphate reductase (415 aa).

The protein belongs to the gamma-glutamyl phosphate reductase family.

The protein resides in the cytoplasm. It catalyses the reaction L-glutamate 5-semialdehyde + phosphate + NADP(+) = L-glutamyl 5-phosphate + NADPH + H(+). It participates in amino-acid biosynthesis; L-proline biosynthesis; L-glutamate 5-semialdehyde from L-glutamate: step 2/2. Functionally, catalyzes the NADPH-dependent reduction of L-glutamate 5-phosphate into L-glutamate 5-semialdehyde and phosphate. The product spontaneously undergoes cyclization to form 1-pyrroline-5-carboxylate. The sequence is that of Gamma-glutamyl phosphate reductase from Carboxydothermus hydrogenoformans (strain ATCC BAA-161 / DSM 6008 / Z-2901).